The following is a 39-amino-acid chain: Ribonuclease UK114 (39 aa).

It belongs to the RutC family. As to quaternary structure, monomer. The N-terminus may be blocked. As to expression, mainly expressed in the liver and kidney. Lower expression found in intestine, gizzard, glandular stomach, heart, brain and spleen.

The protein resides in the cytoplasm. Its function is as follows. Endoribonuclease responsible for the inhibition of the translation by cleaving mRNA. Inhibits cell-free protein synthesis. Cleaves phosphodiester bonds only in single-stranded RNA. The polypeptide is Ribonuclease UK114 (Gallus gallus (Chicken)).